A 361-amino-acid chain; its full sequence is DNA replication and repair protein RecF (361 aa).

30 to 37 (GQNAQGKT) is a binding site for ATP.

The protein belongs to the RecF family.

Its subcellular location is the cytoplasm. In terms of biological role, the RecF protein is involved in DNA metabolism; it is required for DNA replication and normal SOS inducibility. RecF binds preferentially to single-stranded, linear DNA. It also seems to bind ATP. This Streptococcus gordonii (strain Challis / ATCC 35105 / BCRC 15272 / CH1 / DL1 / V288) protein is DNA replication and repair protein RecF.